The following is a 244-amino-acid chain: 5-oxoprolinase subunit A (244 aa).

Belongs to the LamB/PxpA family. Forms a complex composed of PxpA, PxpB and PxpC.

The catalysed reaction is 5-oxo-L-proline + ATP + 2 H2O = L-glutamate + ADP + phosphate + H(+). Its function is as follows. Catalyzes the cleavage of 5-oxoproline to form L-glutamate coupled to the hydrolysis of ATP to ADP and inorganic phosphate. In Salmonella choleraesuis (strain SC-B67), this protein is 5-oxoprolinase subunit A.